A 325-amino-acid chain; its full sequence is Lactonase drp35 (325 aa).

Ca(2+)-binding residues include Glu-46, Thr-108, Gly-110, Asp-128, Thr-131, Tyr-133, Asp-136, Asn-183, Asp-234, and Ser-235. Residue Asp-234 is the Proton donor of the active site.

It belongs to the SMP-30/CGR1 family. It depends on Ca(2+) as a cofactor.

Its subcellular location is the cytoplasm. In terms of biological role, exhibits lactonase activity. Acts in cells with perturbed membrane integrity and is possibly related to the membrane homeostasis. This Staphylococcus epidermidis (strain ATCC 12228 / FDA PCI 1200) protein is Lactonase drp35 (drp35).